We begin with the raw amino-acid sequence, 108 residues long: Transmembrane protein 213 (108 aa).

The N-terminal stretch at 1–27 (MKRLHLAPWTSLVLGLAFLSFHPVYLA) is a signal peptide. Residues 28-71 (EASSGSNSTSTVHHPENLETLEQCPNVDFCPQAARCCHTGVDEY) lie on the Extracellular side of the membrane. N-linked (GlcNAc...) asparagine glycosylation is present at N34. A helical transmembrane segment spans residues 72-92 (GWIAAAVGWSLLFLTLILLCV). Over 93–108 (DKLMKLTPDESKDLQA) the chain is Cytoplasmic.

Its subcellular location is the membrane. The chain is Transmembrane protein 213 (TMEM213) from Bos taurus (Bovine).